A 368-amino-acid chain; its full sequence is Terpene cyclase penA (368 aa).

A run of 6 helical transmembrane segments spans residues Ile10–Ile30, Leu81–Met101, Leu118–Met138, Leu192–His212, Phe233–Ile253, and Leu334–Ala354.

This sequence belongs to the membrane-bound ascI terpene cyclase family.

It is found in the membrane. The protein operates within secondary metabolite biosynthesis. In terms of biological role, part of the gene cluster that mediates the biosynthesis of the indole diterpenes penitrems. The geranylgeranyl diphosphate (GGPP) synthase penG catalyzes the first step in penitrem biosynthesis via conversion of farnesyl pyrophosphate and isopentyl pyrophosphate into geranylgeranyl pyrophosphate (GGPP). Condensation of indole-3-glycerol phosphate with GGPP by the prenyl transferase penC then forms 3-geranylgeranylindole (3-GGI). Epoxidation by the FAD-dependent monooxygenase penM leads to a epoxidized-GGI that is substrate of the terpene cyclase penB for cyclization to yield paspaline. Paspaline is subsequently converted to 13-desoxypaxilline by the cytochrome P450 monooxygenase penP, the latter being then converted to paxilline by the cytochrome P450 monooxygenase penQ. Paxilline is converted to beta-paxitriol via C-10 ketoreduction by the short-chain dehydrogenase PC-15 which can be monoprenylated at the C-20 by the indole diterpene prenyltransferase penD. A two-step elimination (acetylation and elimination) process performed by the O-acetyltransferase PC-16 and the P.simplicissimum ptmI-ortholog not yet identified in P.crustosum, leads to the production of the prenylated form of penijanthine. The FAD-linked oxidoreductase ptmO then converts the prenylated form of penijanthine into PC-M5 which is in turn transformed into PC-M4 by the aromatic dimethylallyltransferase PC-22. A series of oxidation steps involving 4 cytochrome P450 monooxygenases (PC-21, PC-05, PC-23, PC-20) and a FAD-dependent monooxygenase (PC-14) are required for the transformation of PC-M4 to penitrems A and E. Synthesis of these final products is proposed to proceed via penitrems D and C (PC-21, PC-05, PC-14) and penitrems B and F (PC-21, PC-05, PC-14, PC-23). This chain is Terpene cyclase penA, found in Penicillium crustosum (Blue mold fungus).